Consider the following 284-residue polypeptide: MTAQIIDGKAIAQSIRTQLREQVTARKEAGQRVPGLAVILVGADPASQVYVGSKRKACEEVGFISRSYDLDTSCSEAELLALIDQLNDDPSIDGILVQLPLPAHIEDSKVIERIRPDKDVDGFHPYNVGRLAQRIPVLRSCTPMGIMTLIKSTGVDTYGLDAVVVGASNIVGRPMTLELLLAGCTTTTCHRFTKNLEQKIRQADLVVVAVGKPGFIPGEWIKPGAIVIDVGINRLENGTLVGDVQYETAAQNASFITPVPGGVGPMTIASLLENTLYAAEQYHD.

NADP(+) is bound by residues 166-168 and isoleucine 232; that span reads GAS.

This sequence belongs to the tetrahydrofolate dehydrogenase/cyclohydrolase family. In terms of assembly, homodimer.

The catalysed reaction is (6R)-5,10-methylene-5,6,7,8-tetrahydrofolate + NADP(+) = (6R)-5,10-methenyltetrahydrofolate + NADPH. It carries out the reaction (6R)-5,10-methenyltetrahydrofolate + H2O = (6R)-10-formyltetrahydrofolate + H(+). It participates in one-carbon metabolism; tetrahydrofolate interconversion. Its function is as follows. Catalyzes the oxidation of 5,10-methylenetetrahydrofolate to 5,10-methenyltetrahydrofolate and then the hydrolysis of 5,10-methenyltetrahydrofolate to 10-formyltetrahydrofolate. This chain is Bifunctional protein FolD, found in Shewanella oneidensis (strain ATCC 700550 / JCM 31522 / CIP 106686 / LMG 19005 / NCIMB 14063 / MR-1).